A 355-amino-acid polypeptide reads, in one-letter code: Heme A synthase (355 aa).

The next 8 membrane-spanning stretches (helical) occupy residues 21–41 (LARW…VGGI), 85–102 (INLG…FWEW), 136–156 (LFAL…MVAS), 173–193 (LLTA…LGAL), 208–228 (AIGV…VAGL), 264–284 (FLIH…LLLL), 299–319 (ALVI…VSGV), and 322–342 (WVAV…AAAL). Residue histidine 270 coordinates heme. Histidine 327 provides a ligand contact to heme.

Belongs to the COX15/CtaA family. Type 2 subfamily. Interacts with CtaB. It depends on heme b as a cofactor.

Its subcellular location is the cell membrane. The enzyme catalyses Fe(II)-heme o + 2 A + H2O = Fe(II)-heme a + 2 AH2. It participates in porphyrin-containing compound metabolism; heme A biosynthesis; heme A from heme O: step 1/1. In terms of biological role, catalyzes the conversion of heme O to heme A by two successive hydroxylations of the methyl group at C8. The first hydroxylation forms heme I, the second hydroxylation results in an unstable dihydroxymethyl group, which spontaneously dehydrates, resulting in the formyl group of heme A. The chain is Heme A synthase from Sphingopyxis alaskensis (strain DSM 13593 / LMG 18877 / RB2256) (Sphingomonas alaskensis).